We begin with the raw amino-acid sequence, 669 residues long: Probable pectinesterase/pectinesterase inhibitor 21 (669 aa).

A helical transmembrane segment spans residues 16–36; that stretch reads IVITISSVLLISMVVAVTVGV. N-linked (GlcNAc...) asparagine glycans are attached at residues Asn-52, Asn-81, Asn-94, Asn-281, and Asn-300. Residues 52–205 form a pectinesterase inhibitor 21 region; sequence NASVKAVKDV…IELTHNGLAI (154 aa). Residues 255 to 551 form a pectinesterase 21 region; that stretch reads DIVVAQDGSG…FTPAQYIQGD (297 aa). 2 residues coordinate substrate: Thr-330 and Gln-360. The active-site Proton donor; for pectinesterase activity is the Asp-383. Cys-397 and Cys-417 form a disulfide bridge. Asp-404 (nucleophile; for pectinesterase activity) is an active-site residue. Residue Asn-416 is glycosylated (N-linked (GlcNAc...) asparagine). Substrate contacts are provided by Arg-472 and Trp-474. The interval 615-669 is disordered; that stretch reads AYTGTASPESSIKVSSSTETASPESSFTEASTASPESSIMVASTESSGSFFSMFT. Residues 616-628 are compositionally biased toward polar residues; the sequence is YTGTASPESSIKV. The segment covering 629-652 has biased composition (low complexity); it reads SSSTETASPESSFTEASTASPESS. Residues 654–669 show a composition bias toward polar residues; it reads MVASTESSGSFFSMFT.

The protein in the N-terminal section; belongs to the PMEI family. This sequence in the C-terminal section; belongs to the pectinesterase family. In terms of tissue distribution, expressed in flower buds.

The protein localises to the membrane. The catalysed reaction is [(1-&gt;4)-alpha-D-galacturonosyl methyl ester](n) + n H2O = [(1-&gt;4)-alpha-D-galacturonosyl](n) + n methanol + n H(+). It participates in glycan metabolism; pectin degradation; 2-dehydro-3-deoxy-D-gluconate from pectin: step 1/5. Its function is as follows. Acts in the modification of cell walls via demethylesterification of cell wall pectin. This is Probable pectinesterase/pectinesterase inhibitor 21 (PME21) from Arabidopsis thaliana (Mouse-ear cress).